We begin with the raw amino-acid sequence, 268 residues long: Zinc import ATP-binding protein ZnuC (268 aa).

One can recognise an ABC transporter domain in the interval 16-231 (IQLKNINVVF…PTFMRLWGNQ (216 aa)). 48 to 55 (GPNGGGKS) provides a ligand contact to ATP.

Belongs to the ABC transporter superfamily. Zinc importer (TC 3.A.1.15.5) family. As to quaternary structure, the complex is composed of two ATP-binding proteins (ZnuC), two transmembrane proteins (ZnuB) and a solute-binding protein (ZnuA).

The protein localises to the cell inner membrane. The catalysed reaction is Zn(2+)(out) + ATP(in) + H2O(in) = Zn(2+)(in) + ADP(in) + phosphate(in) + H(+)(in). In terms of biological role, part of the ABC transporter complex ZnuABC involved in zinc import. Responsible for energy coupling to the transport system. In Haemophilus influenzae (strain ATCC 51907 / DSM 11121 / KW20 / Rd), this protein is Zinc import ATP-binding protein ZnuC.